Consider the following 253-residue polypeptide: Tryptophan synthase alpha chain (253 aa).

Active-site proton acceptor residues include Glu-47 and Asp-58.

This sequence belongs to the TrpA family. Tetramer of two alpha and two beta chains.

It catalyses the reaction (1S,2R)-1-C-(indol-3-yl)glycerol 3-phosphate + L-serine = D-glyceraldehyde 3-phosphate + L-tryptophan + H2O. Its pathway is amino-acid biosynthesis; L-tryptophan biosynthesis; L-tryptophan from chorismate: step 5/5. The alpha subunit is responsible for the aldol cleavage of indoleglycerol phosphate to indole and glyceraldehyde 3-phosphate. The protein is Tryptophan synthase alpha chain of Lactococcus lactis subsp. cremoris (strain MG1363).